The following is a 508-amino-acid chain: Cell division protein FtsZ (508 aa).

GTP-binding positions include 24–28 (GAGGN), 111–113 (GTG), glutamate 142, arginine 146, and aspartate 190. 2 disordered regions span residues 342–389 (IAET…SAPQ) and 428–508 (VAEE…RLAN). The segment covering 464–482 (QQASAPQAQARSAQSARPQ) has biased composition (low complexity).

Belongs to the FtsZ family. Homodimer. Polymerizes to form a dynamic ring structure in a strictly GTP-dependent manner. Interacts directly with several other division proteins.

The protein resides in the cytoplasm. In terms of biological role, essential cell division protein that forms a contractile ring structure (Z ring) at the future cell division site. The regulation of the ring assembly controls the timing and the location of cell division. One of the functions of the FtsZ ring is to recruit other cell division proteins to the septum to produce a new cell wall between the dividing cells. Binds GTP and shows GTPase activity. This chain is Cell division protein FtsZ, found in Caulobacter vibrioides (strain ATCC 19089 / CIP 103742 / CB 15) (Caulobacter crescentus).